Reading from the N-terminus, the 100-residue chain is Large ribosomal subunit protein uL23 (100 aa).

The protein belongs to the universal ribosomal protein uL23 family. As to quaternary structure, part of the 50S ribosomal subunit. Contacts protein L29, and trigger factor when it is bound to the ribosome.

Functionally, one of the early assembly proteins it binds 23S rRNA. One of the proteins that surrounds the polypeptide exit tunnel on the outside of the ribosome. Forms the main docking site for trigger factor binding to the ribosome. The protein is Large ribosomal subunit protein uL23 of Synechococcus sp. (strain WH7803).